Reading from the N-terminus, the 476-residue chain is Probable cytosolic Fe-S cluster assembly factor GI11683 (476 aa).

[4Fe-4S] cluster is bound by residues Cys-23, Cys-68, Cys-71, Cys-74, Cys-187, Cys-243, Cys-395, and Cys-399.

It belongs to the NARF family.

In terms of biological role, component of the cytosolic iron-sulfur (Fe/S) protein assembly machinery. Required for maturation of extramitochondrial Fe/S proteins. This Drosophila mojavensis (Fruit fly) protein is Probable cytosolic Fe-S cluster assembly factor GI11683.